Reading from the N-terminus, the 344-residue chain is MLKVLSLRSALQRAASTRQLVYEGYRNPPEAIQLKTVTIADKPSADQVLVQWIAAPINPADLNQIQGVYPVKPALPAVGGNEGFGKVISVGSNVSSIKVGDHVIPDRSGLGTWRELGLHQENDLFPIDNTLSMEYAATFQVNPPTAYRMLKDFIDLKKGDTVAQNGANSAVGKHVIQICRILGIKTVNVVRSRDNLEELVKELKDLGADEVITQEELYSRKKKFPGVKLALNCVGGRSSLFLASLLDHGGCMVTYGGMSKQPVDCPTGPLIFKDISLRGFWMSRWYDIQKSPEKRHEMYQELAGWMKSGEIKKQEIVKNRLEDHAKALDTALSKFDKKQFFVLE.

The N-terminal 14 residues, 1–14, are a transit peptide targeting the mitochondrion; sequence MLKVLSLRSALQRA. The active-site Proton donor is Tyr-69. NADP(+) contacts are provided by residues Asn-142, 168 to 171, 191 to 193, 255 to 258, 280 to 282, and Lys-338; these read NSAV, RSR, YGGM, and FWM.

The protein belongs to the zinc-containing alcohol dehydrogenase family. Quinone oxidoreductase subfamily. Homodimer.

It localises to the mitochondrion. It catalyses the reaction a 2,3-saturated acyl-[ACP] + NADP(+) = a (2E)-enoyl-[ACP] + NADPH + H(+). Catalyzes the NADPH-dependent reduction of trans-2-enoyl thioesters in mitochondrial fatty acid synthesis (fatty acid synthesis type II). Fatty acid chain elongation in mitochondria uses acyl carrier protein (ACP) as an acyl group carrier, but the enzyme accepts both ACP and CoA thioesters as substrates in vitro. May provide the octanoyl chain used for lipoic acid biosynthesis, regulating protein lipoylation and mitochondrial respiratory activity. Involved in iron homeostasis; affecting Fe-S cluster assembly and ceramide metabolism. Required for proper morphology and bioenergetic functions of mitochondria. Required for maintenance of neurons. In Caenorhabditis elegans, this protein is Enoyl-[acyl-carrier-protein] reductase, mitochondrial.